A 113-amino-acid chain; its full sequence is U11-theraphotoxin-Hhn1l (113 aa).

A signal peptide spans 1-21 (MNTGRVTFLVVFLVAVSLGPA). The propeptide occupies 22 to 74 (DKEENPMEMQEKTQQGKNYLNFGENLVVPKLEELKAKLVEKESKKSKNSRQKR). Cystine bridges form between C82–C95 and C89–C110.

Belongs to the neurotoxin 14 (magi-1) family. 01 (HNTX-16) subfamily. Expressed by the venom gland.

It localises to the secreted. Probable ion channel inhibitor. This Cyriopagopus hainanus (Chinese bird spider) protein is U11-theraphotoxin-Hhn1l.